Consider the following 611-residue polypeptide: MFRAQQNAFDDAVAKATDENLTSENWEYILDVCDKVGAEESGAKDAVAAMIKRLAHRNANVQLYTLELANALAQNCGPKIHRELASRSFTDALLRLANDRNTHQQVKSKILERMQEWTEMFASNPDFGIMEQAYMKLKTQNPNLQPPSKPGKREITDADRQKEEEELQMALALSIREKATIAPAPQAEASSSAAPVNQTQAPAATSQAVPSGTSAATVSRVRALFDFQPSEPGELQFRKGDVIAVLESVYKDWWKGSLRGQTGIFPLNYVEKLPDPTVEELQREAQMEADVFGQIKNVEKLLTLLSTRSSELNVQDNEEITALYHSTLAIRPKLIELIGKYSQKKDEFTQLNEKFIKARRDYESLLEASMAHPAQSQYGRPAQPPYGYPGAAPVGYPQGPPQADPQRYFSPRPQETQAPPANAPAFYGTEQAHAYPPTSQSPDPRQTPPAGAPYQQPQPQQQRQPSSESYQPVYHRPESTYENPQELGTSVYDSPVEHPASQRPPYPGAVQVPAAVQQHFQQQQQQPQQQSQQPHPEYPASGYTPEDASRPPAHQAQPPYPSHQPPPMHQPPPVPGTSTTPTPYPALNAGGGYQAYNPSQTDVSNPASFYR.

One can recognise a VHS domain in the interval 16–145 (ATDENLTSEN…KLKTQNPNLQ (130 aa)). Disordered stretches follow at residues 140-163 (QNPNLQPPSKPGKREITDADRQKE) and 182-211 (APAPQAEASSSAAPVNQTQAPAATSQAVPS). The segment covering 151-163 (GKREITDADRQKE) has biased composition (basic and acidic residues). Residues 162-181 (KEEEELQMALALSIREKATI) enclose the UIM domain. The segment covering 182 to 195 (APAPQAEASSSAAP) has biased composition (low complexity). The span at 196–211 (VNQTQAPAATSQAVPS) shows a compositional bias: polar residues. Positions 216-275 (ATVSRVRALFDFQPSEPGELQFRKGDVIAVLESVYKDWWKGSLRGQTGIFPLNYVEKLPD) constitute an SH3 domain. Positions 373–611 (PAQSQYGRPA…DVSNPASFYR (239 aa)) are disordered. Low complexity-rich tracts occupy residues 388 to 397 (YPGAAPVGYP) and 452 to 472 (APYQQPQPQQQRQPSSESYQP). Residues 480–492 (TYENPQELGTSVY) are compositionally biased toward polar residues. Residues 509-534 (AVQVPAAVQQHFQQQQQQPQQQSQQP) show a composition bias toward low complexity. Over residues 558–575 (PPYPSHQPPPMHQPPPVP) the composition is skewed to pro residues. Polar residues predominate over residues 596 to 611 (YNPSQTDVSNPASFYR).

This sequence belongs to the STAM family. As to quaternary structure, component of the ESCRT-0 complex composed of HSE1 and VPS27.

The protein localises to the endosome membrane. In terms of biological role, component of the ESCRT-0 complex which is the sorting receptor for ubiquitinated cargo proteins at the multivesicular body (MVB). The protein is Class E vacuolar protein-sorting machinery protein hse1 (hse1) of Aspergillus niger (strain ATCC MYA-4892 / CBS 513.88 / FGSC A1513).